We begin with the raw amino-acid sequence, 290 residues long: 4-hydroxybenzoate octaprenyltransferase (290 aa).

Transmembrane regions (helical) follow at residues Ile-23–Tyr-43, Leu-46–Ile-66, Ala-96–Ile-116, Thr-118–Tyr-138, Leu-141–Thr-161, Cys-169–Ile-189, Ile-212–Ile-232, Leu-235–Trp-255, and Leu-265–Leu-285.

Belongs to the UbiA prenyltransferase family. Mg(2+) serves as cofactor.

The protein resides in the cell inner membrane. It catalyses the reaction all-trans-octaprenyl diphosphate + 4-hydroxybenzoate = 4-hydroxy-3-(all-trans-octaprenyl)benzoate + diphosphate. It participates in cofactor biosynthesis; ubiquinone biosynthesis. Its function is as follows. Catalyzes the prenylation of para-hydroxybenzoate (PHB) with an all-trans polyprenyl group. Mediates the second step in the final reaction sequence of ubiquinone-8 (UQ-8) biosynthesis, which is the condensation of the polyisoprenoid side chain with PHB, generating the first membrane-bound Q intermediate 3-octaprenyl-4-hydroxybenzoate. This chain is 4-hydroxybenzoate octaprenyltransferase, found in Acinetobacter baylyi (strain ATCC 33305 / BD413 / ADP1).